Reading from the N-terminus, the 105-residue chain is Large ribosomal subunit protein uL24 (105 aa).

The protein belongs to the universal ribosomal protein uL24 family. Part of the 50S ribosomal subunit.

One of two assembly initiator proteins, it binds directly to the 5'-end of the 23S rRNA, where it nucleates assembly of the 50S subunit. Functionally, one of the proteins that surrounds the polypeptide exit tunnel on the outside of the subunit. In Thioalkalivibrio sulfidiphilus (strain HL-EbGR7), this protein is Large ribosomal subunit protein uL24.